The following is a 754-amino-acid chain: 1,4-alpha-glucan branching enzyme GlgB (754 aa).

The Nucleophile role is filled by D431. E484 serves as the catalytic Proton donor.

Belongs to the glycosyl hydrolase 13 family. GlgB subfamily. As to quaternary structure, monomer.

It carries out the reaction Transfers a segment of a (1-&gt;4)-alpha-D-glucan chain to a primary hydroxy group in a similar glucan chain.. Its pathway is glycan biosynthesis; glycogen biosynthesis. Catalyzes the formation of the alpha-1,6-glucosidic linkages in glycogen by scission of a 1,4-alpha-linked oligosaccharide from growing alpha-1,4-glucan chains and the subsequent attachment of the oligosaccharide to the alpha-1,6 position. This chain is 1,4-alpha-glucan branching enzyme GlgB, found in Prochlorococcus marinus (strain MIT 9301).